A 434-amino-acid polypeptide reads, in one-letter code: Ribosomal RNA-processing protein 14 (434 aa).

An N-acetylserine modification is found at Ser2. Basic and acidic residues-rich tracts occupy residues 32 to 58 (KSQE…LDPE), 70 to 79 (VMKKKEKDAK), and 95 to 105 (KQKEATSKVEG). A disordered region spans residues 32–257 (KSQEQWKAKK…RFKKGKKDSE (226 aa)). Residues 121-140 (PDEDEEEEEDIKVIFDDEGN) are compositionally biased toward acidic residues. The segment covering 144 to 178 (LESKKDTTEPDRSVEKKSITEEEKLQRKKNLEALR) has biased composition (basic and acidic residues). 2 coiled-coil regions span residues 162-230 (ITEE…EIAS) and 293-360 (AKND…QKRK). Positions 220-241 (EQEQDQDEIASDSDMEDIDSDL) are enriched in acidic residues. Residues 375-392 (TISERQKRREENLRIRKD) are compositionally biased toward basic and acidic residues. The tract at residues 375–434 (TISERQKRREENLRIRKDNKGKKRNKQEKMKRKYVGSAVPKKRAGFEGRLKTGKKKGGPK) is disordered. 2 stretches are compositionally biased toward basic residues: residues 393–408 (NKGK…KRKY) and 425–434 (KTGKKKGGPK).

The protein belongs to the SURF6 family. Component of the 90S and 60S pre-ribosomal particles.

Its subcellular location is the nucleus. It is found in the nucleolus. Its function is as follows. Involved in ribosome biogenesis and cell polarity. Required for the synthesis of both 40S and 60S ribosomal subunits and may also play some direct role in correct positioning of the mitotic spindle during mitosis. This Saccharomyces cerevisiae (strain ATCC 204508 / S288c) (Baker's yeast) protein is Ribosomal RNA-processing protein 14 (RRP14).